We begin with the raw amino-acid sequence, 394 residues long: Elongation factor Tu (394 aa).

The tr-type G domain maps to 10 to 204 (KPHVNIGTIG…AVDSYIPQPV (195 aa)). The interval 19–26 (GHVDHGKT) is G1. A GTP-binding site is contributed by 19-26 (GHVDHGKT). Residue threonine 26 participates in Mg(2+) binding. Positions 60–64 (GITIS) are G2. The interval 81 to 84 (DCPG) is G3. GTP contacts are provided by residues 81-85 (DCPGH) and 136-139 (NKVD). Residues 136–139 (NKVD) form a G4 region. Positions 174 to 176 (SAL) are G5.

This sequence belongs to the TRAFAC class translation factor GTPase superfamily. Classic translation factor GTPase family. EF-Tu/EF-1A subfamily. In terms of assembly, monomer.

It is found in the cytoplasm. The enzyme catalyses GTP + H2O = GDP + phosphate + H(+). Its function is as follows. GTP hydrolase that promotes the GTP-dependent binding of aminoacyl-tRNA to the A-site of ribosomes during protein biosynthesis. The polypeptide is Elongation factor Tu (Rickettsia canadensis (strain McKiel)).